The sequence spans 136 residues: DNA-directed RNA polymerase subunit omega (136 aa).

The tract at residues 79-107 (EPEAETVPLLSSSPAAAAVAPQSSSDDAA) is disordered. A compositionally biased stretch (low complexity) spans 89-107 (SSSPAAAAVAPQSSSDDAA).

Belongs to the RNA polymerase subunit omega family. As to quaternary structure, the RNAP catalytic core consists of 2 alpha, 1 beta, 1 beta' and 1 omega subunit. When a sigma factor is associated with the core the holoenzyme is formed, which can initiate transcription.

The enzyme catalyses RNA(n) + a ribonucleoside 5'-triphosphate = RNA(n+1) + diphosphate. In terms of biological role, promotes RNA polymerase assembly. Latches the N- and C-terminal regions of the beta' subunit thereby facilitating its interaction with the beta and alpha subunits. The sequence is that of DNA-directed RNA polymerase subunit omega from Methylobacterium radiotolerans (strain ATCC 27329 / DSM 1819 / JCM 2831 / NBRC 15690 / NCIMB 10815 / 0-1).